The following is a 256-amino-acid chain: ATP-dependent dethiobiotin synthetase BioD (256 aa).

An ATP-binding site is contributed by 13-18; the sequence is EVGKTY. Threonine 17 contributes to the Mg(2+) binding site. Lysine 38 is a catalytic residue. Serine 42 provides a ligand contact to substrate. Residues aspartate 56, 118–121, and 187–188 each bind ATP; these read EGAG and NR. Residues aspartate 56 and glutamate 118 each coordinate Mg(2+).

It belongs to the dethiobiotin synthetase family. In terms of assembly, homodimer. Mg(2+) is required as a cofactor.

It localises to the cytoplasm. The catalysed reaction is (7R,8S)-7,8-diammoniononanoate + CO2 + ATP = (4R,5S)-dethiobiotin + ADP + phosphate + 3 H(+). Its pathway is cofactor biosynthesis; biotin biosynthesis; biotin from 7,8-diaminononanoate: step 1/2. Catalyzes a mechanistically unusual reaction, the ATP-dependent insertion of CO2 between the N7 and N8 nitrogen atoms of 7,8-diaminopelargonic acid (DAPA, also called 7,8-diammoniononanoate) to form a ureido ring. This Rhodopirellula baltica (strain DSM 10527 / NCIMB 13988 / SH1) protein is ATP-dependent dethiobiotin synthetase BioD.